Consider the following 453-residue polypeptide: Major fimbrium subunit FimC (453 aa).

The signal sequence occupies residues 1-28 (MKMKYFHHPSGLLPRLLLLLLLTMGAVA). C29 is lipidated: N-palmitoyl cysteine. C29 carries the S-diacylglycerol cysteine lipid modification. Residues 29–56 (CTKEDNPDQPTSDEVATVKMSLDDVEMR) constitute a propeptide that is removed on maturation.

Belongs to the bacteroidetes fimbrillin superfamily. FimA/Mfa1 family. As to quaternary structure, fimbriae are composed of a major, structural subunit and the minor components FimC, FimD and FimE. Identified in a complex composed of FimC, FimD and FimE (in vitro). The complex interacts with host extracellular matrix proteins, including fibronectin and type I collagen. Interacts with host CXCR4.

It localises to the fimbrium. The protein localises to the cell outer membrane. Minor component of fimbriae. These long, filamentous pili are attached to the cell surface; they mediate biofilm formation, adhesion onto host cells and onto other bacteria that are part of the oral microbiome. They play an important role in invasion of periodontal tissues and are major virulence factors. FimC, FimD and FimE contribute to interaction with host CXCR4 and thereby down-regulate the TLR2-mediated host immune response. The polypeptide is Major fimbrium subunit FimC (Porphyromonas gingivalis (strain ATCC 33277 / DSM 20709 / CIP 103683 / JCM 12257 / NCTC 11834 / 2561)).